Here is a 1134-residue protein sequence, read N- to C-terminus: MHQMNTKMHFRFALALLMAFFSHDVLAKNLKYRIYEEQRVGSVIARLSEDVADVLLKLPNPSAVRFRAMPRGNSPLLVVNENTGEISIGAKIDREQLCQKNLNCSIEFDVLTLPTEHLQLFHIEVDVLDINDNSPQFSRPVIPIEISESAAVGTRIPLDSAFDPDVGENSLHTYSLSANDYFNIEVRTRTDGAKYAELIVVKELDRELKASYELQLTASDMGVPQRSGSSILKISISDSNDNSPAFEQPSYTIQLLENSPVGTLLLDLNATDPDEGANGRIVYSFSSHVSPKIIETFKIDSEKGHLTLFKPVDYEITKSYEIDVQAQDLGPNSIPAHCKIIIKVVDVNDNKPEISINLMSPGKEEVSYVFEGDPIDTFVAIVRVQDKDSGLNGEIICKLHGHGHFKLQKTYENNYLILTNATLDREKRSEYSLTVIAEDKGTPSLSSVRHFTVQINDINDNPPRFQRSRYEFVISENNSPGAYITTVTATDPDLGENGHVTYTILESFVLGSSITTYVTIDPSNGAIYALRIFDHEEVSQITFVVEARDGGSQKQLSSNTTVVLTIIDENDNVPVVIGPAMHNNTAEISIPKGAESGFHVTRIRVVDRDSGANAEFSCSIVSGNEENIFIMDPRSCDIHTNVSMESIPSAEWALSVIIQDKGSPPLHTKVLLRCMVFDYAESVTSTAMTSVSRASLDVSMIIIISLGAICAVLLVIMVLFATRCNREKKDTRSYNCRVAESTYQHHPKRPSRQIHKGDITLVPTINGTLPIRSHHRSSPSSSPTLERGQMGSRQSHNSHQSLNSLVTISSNHVPENFSLELTHATPAVEVSQLLSMLHQGQYQPRPSFRGNKYSRSYRYALQDMDKFSLKDSGRGDSEAGDSDYDLGRDSPIDRLLGEGFSDLFLTDGRIPAAMRLCTEECRVLGHSDQCWMPPLPSPSSDYRSNMFIPGEEFPAQPQQQHSHQGLDDDSQPAENGEKKKSFSTFGKDSPSDEDSGDSSTSSLLSEMSSVFQRLLPASLDTFSECNEGDRSNSLERRKGPAQGKTGGYPQGVAAWAASTHFQNPTSSSGTPLGTHSSVQPSSKWLPAMEEIPENYEEDDFDNVLNHLSDGKHELMDASELVAEINKLLQDVRQS.

The first 27 residues, Met-1 to Ala-27, serve as a signal peptide directing secretion. Cadherin domains lie at Lys-28–Phe-137, Ser-138–Phe-246, Glu-247–Ile-354, Pro-361–Phe-465, Gln-466–Val-576, and His-582–Met-688. Topologically, residues Lys-28–Ser-699 are extracellular. N-linked (GlcNAc...) asparagine glycosylation occurs at Asn-103. Residue Asn-269 is glycosylated (N-linked (GlcNAc...) asparagine). Residue Asn-559 is glycosylated (N-linked (GlcNAc...) asparagine). A helical transmembrane segment spans residues Met-700–Phe-720. Topologically, residues Ala-721–Ser-1134 are cytoplasmic. Disordered stretches follow at residues Leu-769–Gln-800, Ser-868–Arg-888, Asp-941–Leu-1004, and Phe-1022–Lys-1083. A compositionally biased stretch (polar residues) spans Gly-791 to Gln-800. Positions Ser-868–Ser-877 are enriched in basic and acidic residues. The interaction with DAB1 stretch occupies residues Ile-892 to Ser-1134. The segment covering Glu-1027–Lys-1038 has biased composition (basic and acidic residues). The span at Thr-1059–Ser-1082 shows a compositional bias: polar residues.

Interacts with DAB1. Predominantly expressed in kidney and lung.

The protein resides in the cell membrane. Functionally, potential calcium-dependent cell-adhesion protein. This Mus musculus (Mouse) protein is Protocadherin 18 (Pcdh18).